Reading from the N-terminus, the 347-residue chain is GTPase Obg (347 aa).

In terms of domain architecture, Obg spans 1–158 (MFIDNVKLVL…LSVRLELKLI (158 aa)). The region spanning 159–339 (ADVGLVGFPN…LKFMLLEEVK (181 aa)) is the OBG-type G domain. Residues 165–172 (GFPNVGKS), 190–194 (FTTLT), 212–215 (DIPG), 280–283 (SKSD), and 320–322 (SSL) contribute to the GTP site. 2 residues coordinate Mg(2+): Ser-172 and Thr-192.

Belongs to the TRAFAC class OBG-HflX-like GTPase superfamily. OBG GTPase family. Monomer. It depends on Mg(2+) as a cofactor.

The protein localises to the cytoplasm. Its function is as follows. An essential GTPase which binds GTP, GDP and possibly (p)ppGpp with moderate affinity, with high nucleotide exchange rates and a fairly low GTP hydrolysis rate. Plays a role in control of the cell cycle, stress response, ribosome biogenesis and in those bacteria that undergo differentiation, in morphogenesis control. This chain is GTPase Obg, found in Campylobacter lari (strain RM2100 / D67 / ATCC BAA-1060).